We begin with the raw amino-acid sequence, 126 residues long: UPF0235 protein C15orf40 homolog (126 aa).

Residues 1–32 are disordered; it reads MPKKAGATSKGKNQTKEPETAPPAAGPVATDP. Position 89 is a phosphoserine (Ser-89).

Belongs to the UPF0235 family.

This Mus musculus (Mouse) protein is UPF0235 protein C15orf40 homolog.